A 174-amino-acid polypeptide reads, in one-letter code: Large ribosomal subunit protein bL17 (174 aa).

Belongs to the bacterial ribosomal protein bL17 family. Part of the 50S ribosomal subunit. Contacts protein L32.

The chain is Large ribosomal subunit protein bL17 from Ruminiclostridium cellulolyticum (strain ATCC 35319 / DSM 5812 / JCM 6584 / H10) (Clostridium cellulolyticum).